The following is a 313-amino-acid chain: Putative S-adenosyl-L-methionine-dependent methyltransferase MAP_4064c (313 aa).

Residues D129 and 158–159 (DL) each bind S-adenosyl-L-methionine.

The protein belongs to the UPF0677 family.

Exhibits S-adenosyl-L-methionine-dependent methyltransferase activity. This Mycolicibacterium paratuberculosis (strain ATCC BAA-968 / K-10) (Mycobacterium paratuberculosis) protein is Putative S-adenosyl-L-methionine-dependent methyltransferase MAP_4064c.